The chain runs to 106 residues: BLOC-1-related complex subunit 7 (106 aa).

The protein belongs to the BORCS7 family. Component of the BLOC-one-related complex (BORC) which is composed of BLOC1S1, BLOC1S2, BORCS5, BORCS6, BORCS7, BORCS8, KXD1 and SNAPIN.

The protein resides in the lysosome membrane. As part of the BORC complex may play a role in lysosomes movement and localization at the cell periphery. Associated with the cytosolic face of lysosomes, the BORC complex may recruit ARL8B and couple lysosomes to microtubule plus-end-directed kinesin motor. The sequence is that of BLOC-1-related complex subunit 7 from Homo sapiens (Human).